The sequence spans 393 residues: Sugar efflux transporter B (393 aa).

Transmembrane regions (helical) follow at residues 13–33, 52–72, 84–101, 105–124, 152–172, 174–194, 219–239, 253–273, 283–303, 308–328, 344–364, and 366–386; these read FDLT…AGAL, MVGF…QFLA, LIVF…LFAW, YFIL…TANP, VSLA…GFSF, VMYL…WFFL, LLLF…IINM, LAGV…LIAG, LLMC…LLAH, LLGL…IGML, LYTN…GIAA, and IWNY…TMFC.

The protein belongs to the major facilitator superfamily. Set transporter family.

The protein resides in the cell inner membrane. Functionally, involved in the efflux of sugars. The physiological role may be the detoxification of non-metabolizable sugar analogs. Can transport lactose and glucose. This chain is Sugar efflux transporter B (setB), found in Salmonella typhimurium (strain LT2 / SGSC1412 / ATCC 700720).